Here is a 746-residue protein sequence, read N- to C-terminus: Protein zyg-11 homolog (746 aa).

LRR repeat units lie at residues 185–209 (LPRL…GLRS), 216–241 (MHQL…VLQH), and 265–289 (LPQL…AFVE).

It belongs to the zyg-11 family.

In terms of biological role, serves as substrate adapter subunit in an E3 ubiquitin ligase complex zyg11-cul2-elongin BC. Targets substrates bearing N-terminal glycine degrons for proteasomal degradation. This chain is Protein zyg-11 homolog (zyg11), found in Danio rerio (Zebrafish).